The following is a 333-amino-acid chain: Cytochrome f (333 aa).

Positions 1–44 (MRNACTRARLTRTARAMVKTLFIAIASVTFFFTSDLALPQSAAA) are cleaved as a signal peptide. 4 residues coordinate heme: Y45, C66, C69, and H70. The helical transmembrane segment at 299 to 318 (VGWLIAFVALVMLAQVMLVL) threads the bilayer.

Belongs to the cytochrome f family. In terms of assembly, the 4 large subunits of the cytochrome b6-f complex are cytochrome b6, subunit IV (17 kDa polypeptide, PetD), cytochrome f and the Rieske protein, while the 4 small subunits are PetG, PetL, PetM and PetN. The complex functions as a dimer. Heme is required as a cofactor.

It is found in the cellular thylakoid membrane. Functionally, component of the cytochrome b6-f complex, which mediates electron transfer between photosystem II (PSII) and photosystem I (PSI), cyclic electron flow around PSI, and state transitions. This Nostoc sp. (strain PCC 7120 / SAG 25.82 / UTEX 2576) protein is Cytochrome f.